The chain runs to 146 residues: Large ribosomal subunit protein uL15 (146 aa).

The tract at residues Met1 to Gly54 is disordered. Residues Arg23–Val37 show a composition bias toward gly residues.

Belongs to the universal ribosomal protein uL15 family. As to quaternary structure, part of the 50S ribosomal subunit.

Its function is as follows. Binds to the 23S rRNA. The polypeptide is Large ribosomal subunit protein uL15 (Acinetobacter baylyi (strain ATCC 33305 / BD413 / ADP1)).